The chain runs to 109 residues: Nucleoid-associated protein VV2410 (109 aa).

Residues 1–22 are disordered; it reads MFGKGGMGNLMKQAQQMQERMQ.

The protein belongs to the YbaB/EbfC family. In terms of assembly, homodimer.

It localises to the cytoplasm. The protein resides in the nucleoid. In terms of biological role, binds to DNA and alters its conformation. May be involved in regulation of gene expression, nucleoid organization and DNA protection. This Vibrio vulnificus (strain YJ016) protein is Nucleoid-associated protein VV2410.